Reading from the N-terminus, the 1125-residue chain is Telomerase reverse transcriptase (1125 aa).

Positions 1–234 (MPRAPRCRAV…ARRRRSSARG (234 aa)) are RNA-interacting domain 1. Residues 58–199 (VPWDAQPPPA…RQVGGTRAGF (142 aa)) form a GQ motif region. The segment at 137 to 141 (WGLLL) is required for regulating specificity for telomeric DNA and for processivity for primer elongation. Residues 186-308 (RRPTRQVGGT…WRLSPSEGEP (123 aa)) form a disordered region. Positions 224 to 243 (GARRRRSSARGRLPPAKRPR) are enriched in basic residues. Residues 226–244 (RRRRSSARGRLPPAKRPRR) carry the Bipartite nuclear localization signal motif. Serine 231 is subject to Phosphoserine; by PKB/AKT1. Positions 235–312 (RLPPAKRPRR…PSEGEPGAGA (78 aa)) are linker. Composition is skewed to basic and acidic residues over residues 244 to 253 (RGLEPGRDLE) and 269 to 279 (DAAEAKSRKGD). The tract at residues 290–531 (GERGVGSASW…VPAAEHRQRE (242 aa)) is required for oligomerization. An RNA-interacting domain 2 region spans residues 313–543 (CAETKRFLYC…LGRFLHWLMG (231 aa)). The TFLY; involved in RNA binding motif lies at 316–321 (TKRFLY). Residues 364-514 (PRRPRRLPAR…MKVQDCAWLR (151 aa)) are QFP motif. A CP motif region spans residues 385–405 (LGNHARSPYGALLRAHCPLPA). At serine 450 the chain carries Phosphoserine; by DYRK2. A Reverse transcriptase domain is found at 598–928 (EVRQHQEARP…CLFPWCGLLL (331 aa)). Phosphotyrosine; by SRC-type Tyr-kinases is present on tyrosine 700. Mg(2+) contacts are provided by aspartate 705, aspartate 861, and aspartate 862. The required for oligomerization stretch occupies residues 907-921 (LGGAAPLQLPAHCLF). Residues 923–927 (WCGLL) are primer grip sequence. A CTE region spans residues 929-1125 (DTRTLEVHGD…LTADFKTILD (197 aa)).

It belongs to the reverse transcriptase family. Telomerase subfamily. In terms of assembly, catalytic component of the telomerase holoenzyme complex composed of one molecule of TERT, one molecule of WRAP53/TCAB1, two molecules of H/ACA ribonucleoprotein complex subunits DKC1, NOP10, NHP2 and GAR1, and a telomerase RNA template component (TERC). The telomerase holoenzyme complex is associated with TEP1, SMG6/EST1A and POT1. The molecular chaperone HSP90/P23 complex is required for correct assembly and stabilization of the active telomerase. Interacts directly with HSP90A and PTGES3. Interacts with HSPA1A; the interaction occurs in the absence of TERC and dissociates once the complex has formed. Interacts with RAN; the interaction promotes nuclear export of TERT. Interacts with XPO1. Interacts with PTPN11; the interaction retains TERT in the nucleus. Interacts with NCL (via RRM1 and C-terminal RRM4/Arg/Gly-rich domains); the interaction is important for nucleolar localization of TERT. Interacts with SMARCA4 (via the bromodomain); the interaction regulates Wnt-mediated signaling. Interacts with MCRS1 (isoform MCRS2); the interaction inhibits in vitro telomerase activity. Interacts with PIF1; the interaction has no effect on the elongation activity of TERT. Interacts with PML; the interaction recruits TERT to PML bodies and inhibits telomerase activity. Interacts with GNL3L. Interacts with isoform 1 and isoform 2 of NVL. Interacts with DHX36. Interacts with ATF7. Post-translationally, phosphorylation at Tyr-700 under oxidative stress leads to translocation of TERT to the cytoplasm and reduces its antiapoptotic activity. Dephosphorylated by SHP2/PTPN11 leading to nuclear retention. Phosphorylation at Ser-231 by the AKT pathway promotes nuclear location. Phosphorylation at the G2/M phase at Ser-450 by DYRK2 promotes ubiquitination by the EDVP complex and degradation. In terms of processing, ubiquitinated by the EDVP complex, a E3 ligase complex following phosphorylation at Ser-450 by DYRK2. Ubiquitinated leads to proteasomal degradation.

The protein localises to the nucleus. It localises to the nucleolus. The protein resides in the nucleoplasm. It is found in the chromosome. Its subcellular location is the telomere. The protein localises to the cytoplasm. It localises to the PML body. The enzyme catalyses DNA(n) + a 2'-deoxyribonucleoside 5'-triphosphate = DNA(n+1) + diphosphate. Functionally, telomerase is a ribonucleoprotein enzyme essential for the replication of chromosome termini in most eukaryotes. Active in progenitor and cancer cells. Inactive, or very low activity, in normal somatic cells. Catalytic component of the teleromerase holoenzyme complex whose main activity is the elongation of telomeres by acting as a reverse transcriptase that adds simple sequence repeats to chromosome ends by copying a template sequence within the RNA component of the enzyme. Catalyzes the RNA-dependent extension of 3'-chromosomal termini with the 6-nucleotide telomeric repeat unit, 5'-TTAGGG-3'. The catalytic cycle involves primer binding, primer extension and release of product once the template boundary has been reached or nascent product translocation followed by further extension. More active on substrates containing 2 or 3 telomeric repeats. Telomerase activity is regulated by a number of factors including telomerase complex-associated proteins, chaperones and polypeptide modifiers. Modulates Wnt signaling. Plays important roles in aging and antiapoptosis. This is Telomerase reverse transcriptase (TERT) from Bos taurus (Bovine).